We begin with the raw amino-acid sequence, 243 residues long: Carboxy-S-adenosyl-L-methionine synthase (243 aa).

S-adenosyl-L-methionine-binding positions include Tyr-40, 65-67 (GCS), 90-91 (DN), 118-119 (DI), Asn-133, and Arg-200.

The protein belongs to the class I-like SAM-binding methyltransferase superfamily. Cx-SAM synthase family. In terms of assembly, homodimer.

It carries out the reaction prephenate + S-adenosyl-L-methionine = carboxy-S-adenosyl-L-methionine + 3-phenylpyruvate + H2O. Its function is as follows. Catalyzes the conversion of S-adenosyl-L-methionine (SAM) to carboxy-S-adenosyl-L-methionine (Cx-SAM). The polypeptide is Carboxy-S-adenosyl-L-methionine synthase (Shewanella baltica (strain OS223)).